A 129-amino-acid chain; its full sequence is MYTAAIDALPPVGDAEFPERAAVVLSGLRKLQGSLAEAASRSRATPSVIVALSGVRTRYDELMTTAAEGPGATLGQRLYVARLRAKLTTAEAANGIGVRKDLIEAVEAEEPATEAETAQIKDLIAALGG.

An Isoglutamyl lysine isopeptide (Lys-Gln) (interchain with Q-Cter in protein Pup) cross-link involves residue Lys-121.

This is an uncharacterized protein from Mycolicibacterium smegmatis (strain ATCC 700084 / mc(2)155) (Mycobacterium smegmatis).